We begin with the raw amino-acid sequence, 348 residues long: Ribosomal RNA small subunit methyltransferase C (348 aa).

Belongs to the methyltransferase superfamily. RsmC family. As to quaternary structure, monomer.

It is found in the cytoplasm. The catalysed reaction is guanosine(1207) in 16S rRNA + S-adenosyl-L-methionine = N(2)-methylguanosine(1207) in 16S rRNA + S-adenosyl-L-homocysteine + H(+). In terms of biological role, specifically methylates the guanine in position 1207 of 16S rRNA in the 30S particle. This Pectobacterium atrosepticum (strain SCRI 1043 / ATCC BAA-672) (Erwinia carotovora subsp. atroseptica) protein is Ribosomal RNA small subunit methyltransferase C.